Here is a 243-residue protein sequence, read N- to C-terminus: tRNA pseudouridine synthase A (243 aa).

The active-site Nucleophile is Asp53. A substrate-binding site is contributed by Tyr111.

It belongs to the tRNA pseudouridine synthase TruA family. In terms of assembly, homodimer.

The catalysed reaction is uridine(38/39/40) in tRNA = pseudouridine(38/39/40) in tRNA. In terms of biological role, formation of pseudouridine at positions 38, 39 and 40 in the anticodon stem and loop of transfer RNAs. This is tRNA pseudouridine synthase A from Chlorobium limicola (strain DSM 245 / NBRC 103803 / 6330).